The chain runs to 783 residues: MNTTTYIGDCRISFFNISSQGFWDNLKSPDVVFGYSLPLLEIQIILIFFCIVMSHMFLRCIGISQIASYMIAGIVLGPQLFDVLEKSSGKLSVDPALDGIAALRCISVFGTLMFTFLMTVRTSRRVAFHSGKLPVVIGIVSFFAPLFGLGFQNFFSDNIDPHYMPLTKALGERTAIVITQSSILLPSTTYILLELKIINSELGRLALSACVINDILGIFSMIVASIQATYIHVSHATAYRDTVAVIIFFLVVFLVFKPMVQWVIDRTPEDKPVEDMYIHAVIITALASAAYFVFFNMKYILGPLMIGIIIPEGPPLGSALEAKFERLTMNVFLPISITFSAMRCDGARILSQFNDIFFNIFLTFLILVIKLVACLAPCLYYKLPLSESLAVSFILSYKSFADFVLYEAVLDDTYISQATYSFLILYSLLNAGIVPTVLRRMYDPRRKYVNYQKRDILHLERNSDLRILTCLHKPENVSETIAFLQLLSSPNLDFPIAVTVLHLVKLVGQINPIIVSHDKKLKRLNKDSYIHTANLAFRQFVLESLESVTVTTFTAFSHENLMHEDICTLALDKTTSMIVVPSGRKWTVDGLFESDNTAIRHLNQSLLDRAPCSIGILVDRGQFSRKSIVTSKKRYIIDVGVLFIGGKDDREALSLVKRMKNNPRIRVTVIRLVFDHEIESDWDYILDNEGLKDLKSTEDNKDIDYIERIVTSSVEVVKAVQLLAEEYDLMVVGRDHDMTSQDLSGLMEWVELPELGVIGDLLAARDLSSKVSVLVVQQQQQRT.

12 consecutive transmembrane segments (helical) span residues 31-51 (VVFG…FFCI), 61-81 (IGIS…PQLF), 100-120 (IAAL…LMTV), 135-155 (VVIG…QNFF), 175-195 (AIVI…LLEL), 206-226 (ALSA…VASI), 244-264 (AVII…QWVI), 276-295 (MYIH…FVFF), 300-322 (ILGP…ALEA), 356-376 (IFFN…ACLA), 389-409 (LAVS…YEAV), and 418-438 (ATYS…PTVL).

The protein belongs to the monovalent cation:proton antiporter 2 (CPA2) transporter (TC 2.A.37) family. CHX (TC 2.A.37.4) subfamily. In terms of tissue distribution, specifically expressed in pollen.

The protein localises to the membrane. May operate as a cation/H(+) antiporter. In Arabidopsis thaliana (Mouse-ear cress), this protein is Cation/H(+) antiporter 10 (CHX10).